Reading from the N-terminus, the 1097-residue chain is DNA-directed RNA polymerase subunit beta (1097 aa).

A disordered region spans residues 1070 to 1097 (LMQDVNPRRNTPSRPTYESLGTSEYEED). A compositionally biased stretch (polar residues) spans 1077 to 1091 (RRNTPSRPTYESLGT).

The protein belongs to the RNA polymerase beta chain family. In terms of assembly, in cyanobacteria the RNAP catalytic core is composed of 2 alpha, 1 beta, 1 beta', 1 gamma and 1 omega subunit. When a sigma factor is associated with the core the holoenzyme is formed, which can initiate transcription.

The enzyme catalyses RNA(n) + a ribonucleoside 5'-triphosphate = RNA(n+1) + diphosphate. Functionally, DNA-dependent RNA polymerase catalyzes the transcription of DNA into RNA using the four ribonucleoside triphosphates as substrates. The sequence is that of DNA-directed RNA polymerase subunit beta from Prochlorococcus marinus (strain MIT 9515).